We begin with the raw amino-acid sequence, 179 residues long: ADP-ribosylation factor-like protein 5B (179 aa).

The N-myristoyl glycine moiety is linked to residue Gly-2. GTP-binding positions include 23 to 30, 66 to 70, 125 to 128, and Ala-159; these read GLDNAGKT, DIGGQ, and NKQD.

The protein belongs to the small GTPase superfamily. Arf family.

Its function is as follows. Binds and exchanges GTP and GDP. This Mus musculus (Mouse) protein is ADP-ribosylation factor-like protein 5B (Arl5b).